The chain runs to 93 residues: MVKLAKQIVVRGRVQGVGFRWATKMIADNLDISGTIENRSDGSVFIQAAGEPLNLAKFVAKVKAGPNPYANVSTYEEQPLEDVPNFRGFQVTG.

The region spanning A5–G93 is the Acylphosphatase-like domain. Residues R20 and N38 contribute to the active site.

Belongs to the acylphosphatase family.

The catalysed reaction is an acyl phosphate + H2O = a carboxylate + phosphate + H(+). In Lacticaseibacillus paracasei (strain ATCC 334 / BCRC 17002 / CCUG 31169 / CIP 107868 / KCTC 3260 / NRRL B-441) (Lactobacillus paracasei), this protein is Acylphosphatase (acyP).